Consider the following 397-residue polypeptide: Iron-sulfur cluster assembly SufBD family protein Rv1462 (397 aa).

Threonine 2 bears the N-acetylthreonine mark.

The protein belongs to the iron-sulfur cluster assembly SufBD family.

The protein is Iron-sulfur cluster assembly SufBD family protein Rv1462 of Mycobacterium tuberculosis (strain ATCC 25618 / H37Rv).